An 881-amino-acid chain; its full sequence is MGCLGNQLLIAILLLSVYGIYCTQYVTVFYGVPAWRNATIPLFCATKNRDTWGTTQCLPDNGDYSELALNVTESFDAWENTVTEQAIEDVWQLFETSIKPCVKLSPLCITMRCNKSETDRWGLTKSSTTITTAAPTSAPVSEKIDMVNETSSCIAQNNCTGLEQEQMISCKFTMTGLKRDKTKEYNETWYSTDLVCEQGNSTDNESRCYMNHCNTSVIQESCDKHYWDTIRFRYCAPPGYALLRCNDTNYSGFMPKCSKVVVSSCTRMMETQTSTWFGFNGTRAENRTYIYWHGRDNRTIISLNKYYNLTMKCRRPGNKTVLPVTIMSGLVFHSQPINDRPKQAWCWFGGKWKDAIKEVKQTIVKHPRYTGTNNTDKINLTAPGGGDPEVTFMWTNCRGEFLYCKMNWFLNWVEDRDVTTQRPKERHRRNYVPCHIRQIINTWHKVGKNVYLPPREGDLTCNSTVTSLIANIDWTDGNQTSITMSAEVAELYRLELGDYKLVEITPIGLAPTDVKRYTTGGTSRNKRGVFVLGFLGFLATAGSAMGAASLTLTAQSRTLLAGIVQQQQQLLDVVKRQQELLRLTVWGTKNLQTRVTAIEKYLKDQAQLNAWGCAFRQVCHTTVPWPNASLTPDWNNDTWQEWERKVDFLEENITALLEEAQIQQEKNMYELQKLNSWDVFGNWFDLASWIKYIQYGIYVVVGVILLRIVIYIVQMLAKLRQGYRPVFSSPPSYFQXTHTQQDPALPTREGKEGDGGEGGGNSSWPWQIEYIHFLIRQLIRLLTWLFSNCRTLLSRAYQILQPILQRLSATLRRVREVLRTELTYLQYGWSYFHEAVQAGWRSATETLAGAWRDLWETLRRGGRWILAIPRRIRQGLELTLL.

The first 19 residues, 1 to 19, serve as a signal peptide directing secretion; it reads MGCLGNQLLIAILLLSVYG. At 20–696 the chain is on the extracellular side; the sequence is IYCTQYVTVF…ASWIKYIQYG (677 aa). Residue Asn37 is glycosylated (N-linked (GlcNAc...) asparagine; by host). Cys44 and Cys57 form a disulfide bridge. Residues Asn70, Asn114, Asn148, Asn158, Asn186, Asn200, Asn204, Asn214, Asn246, Asn249, Asn280, Asn286, Asn297, Asn308, Asn318, Asn373, and Asn379 are each glycosylated (N-linked (GlcNAc...) asparagine; by host). 5 disulfides stabilise this stretch: Cys101-Cys222, Cys108-Cys213, Cys113-Cys170, Cys235-Cys265, and Cys245-Cys257. The V1 stretch occupies residues 113-169; that stretch reads CNKSETDRWGLTKSSTTITTAAPTSAPVSEKIDMVNETSSCIAQNNCTGLEQEQMIS. Positions 170–213 are V2; that stretch reads CKFTMTGLKRDKTKEYNETWYSTDLVCEQGNSTDNESRCYMNHC. Positions 313–345 are V3; it reads CRRPGNKTVLPVTIMSGLVFHSQPINDRPKQAW. A disulfide bridge connects residues Cys313 and Cys346. 2 disulfide bridges follow: Cys397–Cys461 and Cys404–Cys434. Residues 404–434 form a V4 region; that stretch reads CKMNWFLNWVEDRDVTTQRPKERHRRNYVPC. Residues Asn462 and Asn478 are each glycosylated (N-linked (GlcNAc...) asparagine; by host). Residues 477-484 form a V5 region; the sequence is GNQTSITM. The tract at residues 528-548 is fusion peptide; the sequence is GVFVLGFLGFLATAGSAMGAA. The interval 591–607 is immunosuppression; sequence LQTRVTAIEKYLKDQAQ. N-linked (GlcNAc...) asparagine; by host glycosylation is found at Asn627, Asn636, and Asn652. A coiled-coil region spans residues 636-668; it reads NDTWQEWERKVDFLEENITALLEEAQIQQEKNM. The interval 673 to 694 is MPER; binding to GalCer; that stretch reads KLNSWDVFGNWFDLASWIKYIQ. A helical transmembrane segment spans residues 697–717; sequence IYVVVGVILLRIVIYIVQMLA. At 718 to 881 the chain is on the cytoplasmic side; that stretch reads KLRQGYRPVF…IRQGLELTLL (164 aa). Residues 723 to 726 carry the YXXV motif; contains endocytosis signal motif; that stretch reads YRPV. Residues 737–761 form a disordered region; that stretch reads THTQQDPALPTREGKEGDGGEGGGN. A lipid anchor (S-palmitoyl cysteine; by host) is attached at Cys789. A Di-leucine internalization motif motif is present at residues 880–881; sequence LL.

In terms of assembly, the mature envelope protein (Env) consists of a homotrimer of non-covalently associated gp120-gp41 heterodimers. The resulting complex protrudes from the virus surface as a spike. Interacts with host CD4 and CCR5. Gp120 also interacts with the C-type lectins CD209/DC-SIGN and CLEC4M/DC-SIGNR (collectively referred to as DC-SIGN(R)). The mature envelope protein (Env) consists of a homotrimer of non-covalently associated gp120-gp41 heterodimers. The resulting complex protrudes from the virus surface as a spike. Specific enzymatic cleavages in vivo yield mature proteins. Envelope glycoproteins are synthesized as an inactive precursor that is heavily N-glycosylated and processed likely by host cell furin in the Golgi to yield the mature SU and TM proteins. The cleavage site between SU and TM requires the minimal sequence [KR]-X-[KR]-R. In terms of processing, palmitoylation of the transmembrane protein and of Env polyprotein (prior to its proteolytic cleavage) is essential for their association with host cell membrane lipid rafts. Palmitoylation is therefore required for envelope trafficking to classical lipid rafts, but not for viral replication.

The protein resides in the virion membrane. It localises to the host cell membrane. The protein localises to the host endosome membrane. Its function is as follows. The surface protein gp120 (SU) attaches the virus to the host lymphoid cell by binding to the primary receptor CD4. This interaction induces a structural rearrangement creating a high affinity binding site for a chemokine coreceptor like CCR5. This peculiar 2 stage receptor-interaction strategy allows gp120 to maintain the highly conserved coreceptor-binding site in a cryptic conformation, protected from neutralizing antibodies. These changes are transmitted to the transmembrane protein gp41 and are thought to activate its fusogenic potential by unmasking its fusion peptide. Functionally, surface protein gp120 (SU) may target the virus to gut-associated lymphoid tissue (GALT) by binding host ITGA4/ITGB7 (alpha-4/beta-7 integrins), a complex that mediates T-cell migration to the GALT. Interaction between gp120 and ITGA4/ITGB7 would allow the virus to enter GALT early in the infection, infecting and killing most of GALT's resting CD4+ T-cells. This T-cell depletion is believed to be the major insult to the host immune system leading to AIDS. In terms of biological role, the surface protein gp120 is a ligand for CD209/DC-SIGN and CLEC4M/DC-SIGNR, which are respectively found on dendritic cells (DCs), and on endothelial cells of liver sinusoids and lymph node sinuses. These interactions allow capture of viral particles at mucosal surfaces by these cells and subsequent transmission to permissive cells. DCs are professional antigen presenting cells, critical for host immunity by inducing specific immune responses against a broad variety of pathogens. They act as sentinels in various tissues where they take up antigen, process it, and present it to T-cells following migration to lymphoid organs. SIV subverts the migration properties of dendritic cells to gain access to CD4+ T-cells in lymph nodes. Virus transmission to permissive T-cells occurs either in trans (without DCs infection, through viral capture and transmission), or in cis (following DCs productive infection, through the usual CD4-gp120 interaction), thereby inducing a robust infection. In trans infection, bound virions remain infectious over days and it is proposed that they are not degraded, but protected in non-lysosomal acidic organelles within the DCs close to the cell membrane thus contributing to the viral infectious potential during DCs' migration from the periphery to the lymphoid tissues. On arrival at lymphoid tissues, intact virions recycle back to DCs' cell surface allowing virus transmission to CD4+ T-cells. Virion capture also seems to lead to MHC-II-restricted viral antigen presentation, and probably to the activation of SIV-specific CD4+ cells. The transmembrane protein gp41 (TM) acts as a class I viral fusion protein. Under the current model, the protein has at least 3 conformational states: pre-fusion native state, pre-hairpin intermediate state, and post-fusion hairpin state. During fusion of viral and target intracellular membranes, the coiled coil regions (heptad repeats) assume a trimer-of-hairpins structure, positioning the fusion peptide in close proximity to the C-terminal region of the ectodomain. The formation of this structure appears to drive apposition and subsequent fusion of viral and target cell membranes. Complete fusion occurs in host cell endosomes. The virus undergoes clathrin-dependent internalization long before endosomal fusion, thus minimizing the surface exposure of conserved viral epitopes during fusion and reducing the efficacy of inhibitors targeting these epitopes. Membranes fusion leads to delivery of the nucleocapsid into the cytoplasm. Its function is as follows. The envelope glycoprotein gp160 precursor down-modulates cell surface CD4 antigen by interacting with it in the endoplasmic reticulum and blocking its transport to the cell surface. Functionally, the gp120-gp41 heterodimer allows rapid transcytosis of the virus through CD4 negative cells such as simple epithelial monolayers of the intestinal, rectal and endocervical epithelial barriers. Both gp120 and gp41 specifically recognize glycosphingolipids galactosyl-ceramide (GalCer) or 3' sulfo-galactosyl-ceramide (GalS) present in the lipid rafts structures of epithelial cells. Binding to these alternative receptors allows the rapid transcytosis of the virus through the epithelial cells. This transcytotic vesicle-mediated transport of virions from the apical side to the basolateral side of the epithelial cells does not involve infection of the cells themselves. The protein is Envelope glycoprotein gp160 (env) of Cercopithecidae (Old World monkeys).